Consider the following 210-residue polypeptide: uncharacterized protein (210 aa).

The first 20 residues, M1–A20, serve as a signal peptide directing secretion. Residues I21 to R175 lie on the Lumenal side of the membrane. In terms of domain architecture, GOLD spans K32–M115. N165 carries an N-linked (GlcNAc...) asparagine glycan. Residues I176–F196 traverse the membrane as a helical segment. Topologically, residues I197–V210 are cytoplasmic.

It belongs to the EMP24/GP25L family.

Its subcellular location is the endoplasmic reticulum membrane. This is an uncharacterized protein from Schizosaccharomyces pombe (strain 972 / ATCC 24843) (Fission yeast).